Reading from the N-terminus, the 327-residue chain is 3' cyclic ADP-D-ribose synthase AaTIR (327 aa).

The segment at 10 to 120 (VALSFAGENR…GILKTIGYIN (111 aa)) is TIR domain. Residue K229 is part of the active site.

Homodimer.

It carries out the reaction NADP(+) + H2O = ADP-D-ribose 2'-phosphate + nicotinamide + H(+). The enzyme catalyses NAD(+) = 3'cADPR + nicotinamide + H(+). Functionally, NAD(+) hydrolase (NADase) that generates 3'cADPR, a cyclization variant of cyclic ADP-D-ribose (also called v2-cADPR). Also cleaves NADP(+), but does not cyclize the product. The sequence is that of 3' cyclic ADP-D-ribose synthase AaTIR from Aquimarina amphilecti.